A 284-amino-acid chain; its full sequence is Tropomyosin (284 aa).

Residues 1–41 (MDAIKKKMQAMKLEKDNAVDRAETAEQQSRDAALRAEKAEE) are disordered. Residues 1–284 (MDAIKKKMQA…DQTFSELTGY (284 aa)) adopt a coiled-coil conformation. The segment covering 12 to 41 (KLEKDNAVDRAETAEQQSRDAALRAEKAEE) has biased composition (basic and acidic residues).

This sequence belongs to the tropomyosin family. As to quaternary structure, homodimer.

Its function is as follows. Tropomyosin, in association with the troponin complex, plays a central role in the calcium dependent regulation of muscle contraction. The polypeptide is Tropomyosin (Haemaphysalis longicornis (Bush tick)).